A 1333-amino-acid polypeptide reads, in one-letter code: DNA-directed RNA polymerase subunit beta' (1333 aa).

Residues C60, C62, C75, and C78 each coordinate Zn(2+). 3 residues coordinate Mg(2+): D535, D537, and D539. Residues C901, C983, C990, and C993 each contribute to the Zn(2+) site.

The protein belongs to the RNA polymerase beta' chain family. The RNAP catalytic core consists of 2 alpha, 1 beta, 1 beta' and 1 omega subunit. When a sigma factor is associated with the core the holoenzyme is formed, which can initiate transcription. Mg(2+) serves as cofactor. Requires Zn(2+) as cofactor.

It catalyses the reaction RNA(n) + a ribonucleoside 5'-triphosphate = RNA(n+1) + diphosphate. Functionally, DNA-dependent RNA polymerase catalyzes the transcription of DNA into RNA using the four ribonucleoside triphosphates as substrates. In Corynebacterium efficiens (strain DSM 44549 / YS-314 / AJ 12310 / JCM 11189 / NBRC 100395), this protein is DNA-directed RNA polymerase subunit beta'.